Reading from the N-terminus, the 670-residue chain is Acetyl-coenzyme A synthetase (670 aa).

CoA is bound by residues 205 to 208 and threonine 326; that span reads RRGR. ATP-binding positions include 402–404, 426–431, aspartate 517, arginine 532, and arginine 543; these read GEP and STWWMT. 2 residues coordinate Mg(2+): histidine 556 and valine 559. Position 601 (arginine 601) interacts with CoA. Lysine 626 is modified (N6-acetyllysine).

The protein belongs to the ATP-dependent AMP-binding enzyme family. Mg(2+) is required as a cofactor. In terms of processing, acetylated. Deacetylation by the SIR2-homolog deacetylase activates the enzyme.

The enzyme catalyses acetate + ATP + CoA = acetyl-CoA + AMP + diphosphate. Catalyzes the conversion of acetate into acetyl-CoA (AcCoA), an essential intermediate at the junction of anabolic and catabolic pathways. AcsA undergoes a two-step reaction. In the first half reaction, AcsA combines acetate with ATP to form acetyl-adenylate (AcAMP) intermediate. In the second half reaction, it can then transfer the acetyl group from AcAMP to the sulfhydryl group of CoA, forming the product AcCoA. This is Acetyl-coenzyme A synthetase from Pyrobaculum aerophilum (strain ATCC 51768 / DSM 7523 / JCM 9630 / CIP 104966 / NBRC 100827 / IM2).